Consider the following 252-residue polypeptide: 14-3-3 protein 7 (252 aa).

The protein belongs to the 14-3-3 family. As to quaternary structure, homodimer.

This is 14-3-3 protein 7 (TFT7) from Solanum lycopersicum (Tomato).